Consider the following 582-residue polypeptide: Colicin-E9 (582 aa).

Disordered regions lie at residues 1–74, 246–270, 294–321, 422–489, and 510–542; these read MSGG…SGGG, SPGVTNNTDKDVRPAGFTQGGNTRD, PDQVKQRQDEENRRQQEWDATHPVEAAE, ADAA…IADK, and SKDPELSKNLNPSNKSSVSKGYSPFTPKNQQVG. Positions 20–35 are enriched in gly residues; the sequence is INGGPTGIGVSGGASD. Low complexity predominate over residues 36-45; it reads GSGWSSENNP. The segment covering 46 to 74 has biased composition (gly residues); that stretch reads WGGGSGSGIHWGGGSGRGNGGGNGNSGGG. 3 stretches are compositionally biased toward basic and acidic residues: residues 297–321, 430–453, and 465–476; these read VKQRQDEENRRQQEWDATHPVEAAE, QERRKQKENKEKDAKDKLDKESKR, and PVGDKWLDDAGK. The span at 516–529 shows a compositional bias: low complexity; the sequence is SKNLNPSNKSSVSK. Zn(2+)-binding residues include His-550, His-575, and His-579.

This sequence belongs to the colicin/pyosin nuclease family.

Its function is as follows. This plasmid-coded bactericidal protein is an endonuclease active on both single- and double-stranded DNA but with undefined specificity. In terms of biological role, colicins are polypeptide toxins produced by and active against E.coli and closely related bacteria. The protein is Colicin-E9 (col) of Escherichia coli.